A 203-amino-acid polypeptide reads, in one-letter code: Ras-like protein family member 10A (203 aa).

The tract at residues 1–203 (MGGSLRVAVL…ALHPARCSLM (203 aa)) is small GTPase-like. 11 to 18 (GAPGVGKT) is a binding site for GTP. Positions 33 to 42 (HRPTDSPCLY) match the Effector region motif. GTP is bound by residues 59 to 62 (DGDV) and 129 to 132 (NKRD). The residue at position 200 (Cys200) is a Cysteine methyl ester. A lipid anchor (S-farnesyl cysteine) is attached at Cys200. A propeptide spans 201–203 (SLM) (removed in mature form).

This sequence belongs to the small GTPase superfamily. Ras family. Isoprenylation is essential for nucleolar localization, and the proliferation-inhibiting activity of RASL10A.

Its subcellular location is the cell membrane. It localises to the nucleus. It is found in the nucleolus. The catalysed reaction is GTP + H2O = GDP + phosphate + H(+). In terms of biological role, potent inhibitor of cellular proliferation. This Mus musculus (Mouse) protein is Ras-like protein family member 10A (Rasl10a).